We begin with the raw amino-acid sequence, 424 residues long: Enolase (424 aa).

Residue glutamine 163 coordinates (2R)-2-phosphoglycerate. The Proton donor role is filled by glutamate 204. Mg(2+) contacts are provided by aspartate 241, glutamate 284, and aspartate 311. The (2R)-2-phosphoglycerate site is built by lysine 336, arginine 365, serine 366, and lysine 387. Lysine 336 (proton acceptor) is an active-site residue.

Belongs to the enolase family. Mg(2+) is required as a cofactor.

The protein resides in the cytoplasm. The protein localises to the secreted. It is found in the cell surface. It catalyses the reaction (2R)-2-phosphoglycerate = phosphoenolpyruvate + H2O. The protein operates within carbohydrate degradation; glycolysis; pyruvate from D-glyceraldehyde 3-phosphate: step 4/5. In terms of biological role, catalyzes the reversible conversion of 2-phosphoglycerate (2-PG) into phosphoenolpyruvate (PEP). It is essential for the degradation of carbohydrates via glycolysis. The polypeptide is Enolase (Dictyoglomus turgidum (strain DSM 6724 / Z-1310)).